The following is a 1696-amino-acid chain: PH domain leucine-rich repeat protein phosphatase 1 (1696 aa).

Met-1 is modified (N-acetylmethionine). Disordered regions lie at residues 1 to 97 (MEPA…GGGA) and 222 to 398 (LGHG…VVGE). Over residues 79-92 (VPQPAAGGAAPVTA) the composition is skewed to low complexity. Over residues 313-325 (DTESFSLSPSAES) the composition is skewed to polar residues. Ser-378 bears the Phosphoserine mark. A PH domain is found at 499–599 (RIQLSGMYNV…WLRQVSKVAS (101 aa)). LRR repeat units lie at residues 601–622 (RISSVDLSCCSLEHLPANLFYS), 624–645 (DLTHLNLKQNFLRQNPSLPAAR), 655–676 (KLKSLNLSNNHLGAFPSAVCSI), 678–699 (TLAELNVSCNALQEVPAAVGAM), 701–722 (NLQTFLLDGNFLQSLPAELENM), 724–746 (QLSYLGLSFNEFTDIPEVLEKLT), 836–857 (FLKALYASSNELVQLDVYPVPN), 858–879 (YLSYMDVSRNCLESVPEWVCES), 881–902 (KLEVLDIGHNQICELPARLFCN), 904–925 (SLRKLLAGHNRLARLPERLERT), 926–947 (SVEVLDVQHNQIIELPPNLLMK), 950–971 (SLRFLNASANKLETLPPATLSE), 976–996 (ILQELYLTNNSLTDKCVPLLT), 1000–1021 (RLKILHMAYNRLQSFPASKMAK), 1024–1045 (ELEEIDISGNKLKAIPTTIMNC), 1047–1068 (RMHTVIAHSNCIEVFPEVMQLP), 1069–1090 (EVKCVDLSCNELSEITLPENLP), and 1092–1113 (KLQELDLTGNPRLALDHKSLEL). The region spanning 1138 to 1385 (SHGYTEASGV…DSISAVVVQL (248 aa)) is the PPM-type phosphatase domain. Asp-1173, Gly-1174, Lys-1337, and Asp-1376 together coordinate Mn(2+). 2 disordered regions span residues 1422–1473 (RPSD…SPAY) and 1610–1696 (KPGG…DTPL). Low complexity-rich tracts occupy residues 1431 to 1452 (SSSSGMASEISSELSTSEMSSE), 1647 to 1660 (QQQQQQQQQQQQQQ), and 1670 to 1680 (QAQAQAQAQAQ). The short motif at 1694–1696 (TPL) is the PDZ-binding element.

As to quaternary structure, interacts with the nucleotide free form of K-Ras (KRAS) via its LRR repeats. Interacts with AKT2, AKT3 and PRKCB isoform beta-II. Interacts with WDR48 and USP12. The cofactor is Mn(2+). Mainly present in brain (at protein level). Isoform 2 is more abundant in adult brain neurons than isoform 1 in. Isoforms 1 and 2 are expressed in the retina but not found in rod outer segments.

It localises to the cytoplasm. The protein resides in the membrane. Its subcellular location is the cell membrane. It is found in the nucleus. The protein localises to the nucleoplasm. It localises to the nucleus membrane. The enzyme catalyses O-phospho-L-seryl-[protein] + H2O = L-seryl-[protein] + phosphate. The catalysed reaction is O-phospho-L-threonyl-[protein] + H2O = L-threonyl-[protein] + phosphate. Its activity is regulated as follows. Insensitive to okadaic acid. Deubiquitination by WDR48-USP12 complex positively regulates PHLPP1 stability. In terms of biological role, protein phosphatase involved in regulation of Akt and PKC signaling. Mediates dephosphorylation in the C-terminal domain hydrophobic motif of members of the AGC Ser/Thr protein kinase family; specifically acts on 'Ser-473' of AKT2 and AKT3, 'Ser-660' of PRKCB and 'Ser-657' of PRKCA. Isoform 2 seems to have a major role in regulating Akt signaling in hippocampal neurons while isoform 1 may promote Akt and PKC activation and inhibit ERK signaling. Akt regulates the balance between cell survival and apoptosis through a cascade that primarily alters the function of transcription factors that regulate pro- and antiapoptotic genes. Dephosphorylation of 'Ser-473' of Akt triggers apoptosis and suppression of tumor growth. Dephosphorylation of PRKCA and PRKCB leads to their destabilization and degradation. Dephosphorylates STK4 on 'Thr-387' leading to STK4 activation and apoptosis. Dephosphorylates RPS6KB1 and is involved in regulation of cap-dependent translation. Inhibits cancer cell proliferation and may act as a tumor suppressor. Dephosphorylates RAF1 inhibiting its kinase activity. May act as a negative regulator of K-Ras signaling in membrane rafts. Involved in the hippocampus-dependent long-term memory formation. Involved in circadian control by regulating the consolidation of circadian periodicity after resetting. Involved in development and function of regulatory T-cells. The polypeptide is PH domain leucine-rich repeat protein phosphatase 1 (Phlpp1) (Rattus norvegicus (Rat)).